The following is a 337-amino-acid chain: G-protein coupled receptor 65 (337 aa).

Residues 1 to 5 (MNSTC) are Extracellular-facing. N-linked (GlcNAc...) asparagine glycosylation occurs at Asn2. 2 disulfide bridges follow: Cys5–Cys160 and Cys87–Cys170. A helical membrane pass occupies residues 6-42 (IEEQHDLDHYLFPIVYIFVIIVSIPANIGSLCVSFLQ). Residues 43–46 (AKKE) lie on the Cytoplasmic side of the membrane. A helical transmembrane segment spans residues 47-77 (SELGIYLFSLSLSDLLYALTLPLWIDYTWNK). Residues 78-82 (DNWTF) are Extracellular-facing. N-linked (GlcNAc...) asparagine glycosylation occurs at Asn79. Residues 83–118 (SPALCKGSAFLMYMNFYSSTAFLTCIAVDRYLAVVY) form a helical membrane-spanning segment. The Cytoplasmic segment spans residues 119–126 (PLKFFFLR). A helical transmembrane segment spans residues 127-153 (TRRFALMVSLSIWILETIFNAVMLWED). Topologically, residues 154–174 (ETVVEYCDAEKSNFTLCYDKY) are extracellular. The segment at 154–174 (ETVVEYCDAEKSNFTLCYDKY) is extracellular loop 2 (ECL2). Residue Asn166 is glycosylated (N-linked (GlcNAc...) asparagine). A helical transmembrane segment spans residues 175–212 (PLEKWQINLNLFRTCTGYAIPLVTILICNRKVYQAVRH). Over 213–216 (NKAT) the chain is Cytoplasmic. Residues 217-252 (ENKEKKRIIKLLVSITVTFVLCFTPFHVMLLIRCIL) form a helical membrane-spanning segment. At 253–264 (EHAVNFEDHSNS) the chain is on the extracellular side. The helical transmembrane segment at 265 to 293 (GKRTYTMYRITVALTSLNCVADPILYCFV) threads the bilayer. At 294-337 (TETGRYDMWNILKFCTGRCNTSQRQRKRILSVSTKDTMELEVLE) the chain is on the cytoplasmic side.

This sequence belongs to the G-protein coupled receptor 1 family. Predominantly expressed in thymus, spleen, lymph nodes, small intestine, lung, placenta and peripheral blood leukocytes.

The protein localises to the cell membrane. Its subcellular location is the early endosome membrane. The protein resides in the late endosome membrane. Its activity is regulated as follows. Activated by a network of residues that connects an extracellular-facing cavity to Glu-142, a conserved charged residue buried in the transmembrane core of the receptor. Protonation likely drives conformational changes in extracellular loop 2 (ECL2), which stabilizes movement of transmembrane 3 (TM3) and a series of rearrangements that connect the extracellular-facing cavity to Glu-142, a residue only conserved in proton-sensing G-protein coupled receptors. Activated by BTB09089, a positive allosteric modulator. Functionally, proton-sensing G-protein coupled receptor activated by extracellular pH, which is required to monitor pH changes and generate adaptive reactions. Activated by an optimal pH of 7.4. Ligand binding causes a conformation change that triggers signaling via guanine nucleotide-binding proteins (G proteins) and modulates the activity of downstream effectors, such as adenylate cyclase. GPR65 is mainly coupled to G(s) G proteins and mediates activation of adenylate cyclase activity. May also act as a receptor for the glycosphingolipid psychosine (PSY) and several related glycosphingolipids. Plays a role in immune response by maintaining lysosome function and regulating T-cell metabolism. Acts as a regulator of inflammation by mediating pH-sensing of extracellular acidification which takes place in inflamed tissues: activation regulates endo-lysosomal function of immune cells and T-cell metabolism. Constitutively active in endosomes and stimulates adenylate cyclase production from endosomes independently from extracellular pH changes. This chain is G-protein coupled receptor 65, found in Homo sapiens (Human).